The primary structure comprises 726 residues: Catalase-peroxidase (726 aa).

A cross-link (tryptophyl-tyrosyl-methioninium (Trp-Tyr) (with M-240)) is located at residues tryptophan 91 to tyrosine 214. The active-site Proton acceptor is histidine 92. The segment at residues tyrosine 214–methionine 240 is a cross-link (tryptophyl-tyrosyl-methioninium (Tyr-Met) (with W-91)). A heme b-binding site is contributed by histidine 255. The disordered stretch occupies residues alanine 335 to serine 362.

Belongs to the peroxidase family. Peroxidase/catalase subfamily. Homodimer or homotetramer. Heme b serves as cofactor. Post-translationally, formation of the three residue Trp-Tyr-Met cross-link is important for the catalase, but not the peroxidase activity of the enzyme.

It carries out the reaction H2O2 + AH2 = A + 2 H2O. The catalysed reaction is 2 H2O2 = O2 + 2 H2O. Bifunctional enzyme with both catalase and broad-spectrum peroxidase activity. This is Catalase-peroxidase from Pseudomonas fluorescens (strain ATCC BAA-477 / NRRL B-23932 / Pf-5).